Reading from the N-terminus, the 282-residue chain is MLRVAVPNKGTLAGPASEMLAEAGYRQRHEQRDLTVLDPVNDVEFFFLRPKDIAIYVGSGELDLGITGRDLALDSGSPVDERLALGFGGSNFRYAAPAEAGEWSVGDLAGRRIATSYPRLVTDDLARYGVSADVIRLDGAVEISIQLGVADAIADVVGSGRTLRQHSLVAFGEPICSSEAVVIERRGSDQQEAKDRLVARLQGVVFAQQYVMLDYNCPRDLLDEAAKLTPGLGSPTMSPLADEKWVAVRAMVSRKEAPAIMDRLADFGAKAILSSDIRSCRM.

Belongs to the ATP phosphoribosyltransferase family. Long subfamily. Mg(2+) is required as a cofactor.

Its subcellular location is the cytoplasm. It catalyses the reaction 1-(5-phospho-beta-D-ribosyl)-ATP + diphosphate = 5-phospho-alpha-D-ribose 1-diphosphate + ATP. It functions in the pathway amino-acid biosynthesis; L-histidine biosynthesis; L-histidine from 5-phospho-alpha-D-ribose 1-diphosphate: step 1/9. Feedback inhibited by histidine. Its function is as follows. Catalyzes the condensation of ATP and 5-phosphoribose 1-diphosphate to form N'-(5'-phosphoribosyl)-ATP (PR-ATP). Has a crucial role in the pathway because the rate of histidine biosynthesis seems to be controlled primarily by regulation of HisG enzymatic activity. This is ATP phosphoribosyltransferase from Saccharopolyspora erythraea (strain ATCC 11635 / DSM 40517 / JCM 4748 / NBRC 13426 / NCIMB 8594 / NRRL 2338).